Reading from the N-terminus, the 170-residue chain is Neurotensin/neuromedin N (170 aa).

Residues 1 to 23 (MMAGMKIQLVCMILLAFSSWSLC) form the signal peptide.

This sequence belongs to the neurotensin family. Interacts with NTSR1. Interacts with SORT1. Interacts with SORL1. Post-translationally, neurotensin is cleaved and degraded by Angiotensin-converting enzyme (ACE) and neprilysin (MME). As to expression, brain and gut.

The protein resides in the secreted. Its subcellular location is the cytoplasmic vesicle. It localises to the secretory vesicle. Neurotensin may play an endocrine or paracrine role in the regulation of fat metabolism. It causes contraction of smooth muscle. The protein is Neurotensin/neuromedin N (NTS) of Bos taurus (Bovine).